Consider the following 145-residue polypeptide: Peptide methionine sulfoxide reductase MsrB (145 aa).

In terms of domain architecture, MsrB spans 4-127 (SDELKQRIGD…NSAALKFIPY (124 aa)). The active-site Nucleophile is the Cys-116.

Belongs to the MsrB Met sulfoxide reductase family.

It catalyses the reaction L-methionyl-[protein] + [thioredoxin]-disulfide + H2O = L-methionyl-(R)-S-oxide-[protein] + [thioredoxin]-dithiol. The polypeptide is Peptide methionine sulfoxide reductase MsrB (Streptococcus pyogenes serotype M18 (strain MGAS8232)).